The following is a 443-amino-acid chain: Leucine-rich repeat-containing protein 17 (443 aa).

The N-terminal stretch at 1-15 (MRIVAILLLFCLCRA) is a signal peptide. The interval 20-48 (KSSPGVLRSQGNPSRSHGRGGRRGSSPVK) is disordered. LRR repeat units follow at residues 84–105 (DLLH…MFAK), 108–129 (RLKS…AFFG), and 132–153 (KLTT…AFIY). An LRRCT 1 domain is found at 165 to 216 (NPWHCTCELETLISMLQIPRNRNLGNYAKCGSPPALRNKKLLQLKPQELCDE). One can recognise an LRRNT domain in the interval 229-270 (SGIPAVIRPEADSTLCHNYVFPIQTLDCKRKELKKVPSNIPP). 3 LRR repeats span residues 271–292 (DIVK…EFED), 295–316 (ELKK…AFLG), and 319–342 (HLEE…EDLY). One can recognise an LRRCT 2 domain in the interval 352 to 404 (NPWRCDYSIHYLYYWLKHHYNVHYNGLECKTPEEYKGWSVGKYVRSYYEECPK).

As to expression, expressed in osteoblasts, spleen, lung and heart.

The protein resides in the secreted. The protein localises to the extracellular space. In terms of biological role, involved in bone homeostasis. Acts as a negative regulator of RANKL-induced osteoclast precursor differentiation from bone marrow precursors. In Mus musculus (Mouse), this protein is Leucine-rich repeat-containing protein 17 (Lrrc17).